Reading from the N-terminus, the 424-residue chain is Serine--tRNA ligase (424 aa).

Residue 229 to 231 (TAE) participates in L-serine binding. Residues 260–262 (RTE) and valine 276 contribute to the ATP site. Glutamate 283 serves as a coordination point for L-serine. 347-350 (EVTS) is a binding site for ATP. An L-serine-binding site is contributed by threonine 382.

Belongs to the class-II aminoacyl-tRNA synthetase family. Type-1 seryl-tRNA synthetase subfamily. Homodimer. The tRNA molecule binds across the dimer.

It localises to the cytoplasm. The catalysed reaction is tRNA(Ser) + L-serine + ATP = L-seryl-tRNA(Ser) + AMP + diphosphate + H(+). The enzyme catalyses tRNA(Sec) + L-serine + ATP = L-seryl-tRNA(Sec) + AMP + diphosphate + H(+). Its pathway is aminoacyl-tRNA biosynthesis; selenocysteinyl-tRNA(Sec) biosynthesis; L-seryl-tRNA(Sec) from L-serine and tRNA(Sec): step 1/1. In terms of biological role, catalyzes the attachment of serine to tRNA(Ser). Is also able to aminoacylate tRNA(Sec) with serine, to form the misacylated tRNA L-seryl-tRNA(Sec), which will be further converted into selenocysteinyl-tRNA(Sec). The sequence is that of Serine--tRNA ligase from Rubrobacter xylanophilus (strain DSM 9941 / JCM 11954 / NBRC 16129 / PRD-1).